Reading from the N-terminus, the 379-residue chain is MPAVTYEHIKTCKQSGARLGIVHTPHGSFETPMFMPVGTKATVKTMSPEELRQIEAKIILGNTYHLWLQPGNDIIKQVGGLHNFMNWDGPILTDSGGFQVFSLSNLRKITEESVEFRHHTNGLKLFLSPEKSMEIQNDLGSDIMMAFDECPPMPSEYKYVKDSIERTTRWAERCLNAHKRPEDQALFGIIQGGEYKDLREQSAKELVALDFPGYAIGGLSVGEPKPVMYEMVEHTVQYMPDDKPRYLMGVGSPDALIECSIRGMDMFDCVLPTRIARNGTCMTSNGRLVIKNAKYANDFKPLDENCDCYTCKNYSRAYIRHLIKAEETFGIRLTTIHNLHFLLKLMEDIRQAIREDRLLDFKDEFFEQYGLNVENPKNF.

Aspartate 94 functions as the Proton acceptor in the catalytic mechanism. Residues 94–98 (DSGGF), aspartate 148, glutamine 191, and glycine 218 each bind substrate. Residues 249–255 (GVGSPDA) form an RNA binding region. Aspartate 268 functions as the Nucleophile in the catalytic mechanism. The segment at 273–277 (TRIAR) is RNA binding; important for wobble base 34 recognition. Zn(2+)-binding residues include cysteine 306, cysteine 308, cysteine 311, and histidine 337.

The protein belongs to the queuine tRNA-ribosyltransferase family. As to quaternary structure, homodimer. Within each dimer, one monomer is responsible for RNA recognition and catalysis, while the other monomer binds to the replacement base PreQ1. Requires Zn(2+) as cofactor.

The catalysed reaction is 7-aminomethyl-7-carbaguanine + guanosine(34) in tRNA = 7-aminomethyl-7-carbaguanosine(34) in tRNA + guanine. It functions in the pathway tRNA modification; tRNA-queuosine biosynthesis. Its function is as follows. Catalyzes the base-exchange of a guanine (G) residue with the queuine precursor 7-aminomethyl-7-deazaguanine (PreQ1) at position 34 (anticodon wobble position) in tRNAs with GU(N) anticodons (tRNA-Asp, -Asn, -His and -Tyr). Catalysis occurs through a double-displacement mechanism. The nucleophile active site attacks the C1' of nucleotide 34 to detach the guanine base from the RNA, forming a covalent enzyme-RNA intermediate. The proton acceptor active site deprotonates the incoming PreQ1, allowing a nucleophilic attack on the C1' of the ribose to form the product. After dissociation, two additional enzymatic reactions on the tRNA convert PreQ1 to queuine (Q), resulting in the hypermodified nucleoside queuosine (7-(((4,5-cis-dihydroxy-2-cyclopenten-1-yl)amino)methyl)-7-deazaguanosine). The chain is Queuine tRNA-ribosyltransferase from Staphylococcus haemolyticus (strain JCSC1435).